The following is a 103-amino-acid chain: Small ribosomal subunit protein uS10 (103 aa).

Belongs to the universal ribosomal protein uS10 family. In terms of assembly, part of the 30S ribosomal subunit.

Functionally, involved in the binding of tRNA to the ribosomes. The polypeptide is Small ribosomal subunit protein uS10 (Psychrobacter sp. (strain PRwf-1)).